The chain runs to 123 residues: WAP four-disulfide core domain protein 5 (123 aa).

An N-terminal signal peptide occupies residues 1 to 24 (MRIQSLLLLGALLAVGSQPPAAFG). 2 WAP domains span residues 27–73 (KGEK…CVPR) and 74–121 (VSVK…RDPA). 8 disulfides stabilise this stretch: Cys-34–Cys-62, Cys-41–Cys-66, Cys-49–Cys-61, Cys-55–Cys-70, Cys-81–Cys-109, Cys-88–Cys-113, Cys-96–Cys-108, and Cys-102–Cys-117.

The protein localises to the secreted. Functionally, putative acid-stable proteinase inhibitor. This chain is WAP four-disulfide core domain protein 5 (WFDC5), found in Saimiri boliviensis boliviensis (Bolivian squirrel monkey).